We begin with the raw amino-acid sequence, 508 residues long: ATP synthase subunit alpha, chloroplastic (508 aa).

ATP is bound at residue 173-180; that stretch reads GDRQTGKT.

The protein belongs to the ATPase alpha/beta chains family. F-type ATPases have 2 components, CF(1) - the catalytic core - and CF(0) - the membrane proton channel. CF(1) has five subunits: alpha(3), beta(3), gamma(1), delta(1), epsilon(1). CF(0) has four main subunits: a, b, b' and c.

It localises to the plastid. The protein localises to the chloroplast thylakoid membrane. It catalyses the reaction ATP + H2O + 4 H(+)(in) = ADP + phosphate + 5 H(+)(out). In terms of biological role, produces ATP from ADP in the presence of a proton gradient across the membrane. The alpha chain is a regulatory subunit. In Chara vulgaris (Common stonewort), this protein is ATP synthase subunit alpha, chloroplastic.